A 261-amino-acid polypeptide reads, in one-letter code: Imidazole glycerol phosphate synthase subunit HisF (261 aa).

Catalysis depends on residues D11 and D130.

It belongs to the HisA/HisF family. Heterodimer of HisH and HisF.

The protein resides in the cytoplasm. It catalyses the reaction 5-[(5-phospho-1-deoxy-D-ribulos-1-ylimino)methylamino]-1-(5-phospho-beta-D-ribosyl)imidazole-4-carboxamide + L-glutamine = D-erythro-1-(imidazol-4-yl)glycerol 3-phosphate + 5-amino-1-(5-phospho-beta-D-ribosyl)imidazole-4-carboxamide + L-glutamate + H(+). It participates in amino-acid biosynthesis; L-histidine biosynthesis; L-histidine from 5-phospho-alpha-D-ribose 1-diphosphate: step 5/9. IGPS catalyzes the conversion of PRFAR and glutamine to IGP, AICAR and glutamate. The HisF subunit catalyzes the cyclization activity that produces IGP and AICAR from PRFAR using the ammonia provided by the HisH subunit. This chain is Imidazole glycerol phosphate synthase subunit HisF, found in Jannaschia sp. (strain CCS1).